Consider the following 210-residue polypeptide: Large ribosomal subunit protein uL4 (210 aa).

A disordered region spans residues 44–79 (QHQGTHKVKTRSEVSGGGRKPYRQKGTGNARRGSSR).

The protein belongs to the universal ribosomal protein uL4 family. In terms of assembly, part of the 50S ribosomal subunit.

In terms of biological role, one of the primary rRNA binding proteins, this protein initially binds near the 5'-end of the 23S rRNA. It is important during the early stages of 50S assembly. It makes multiple contacts with different domains of the 23S rRNA in the assembled 50S subunit and ribosome. Functionally, forms part of the polypeptide exit tunnel. This chain is Large ribosomal subunit protein uL4, found in Chloroherpeton thalassium (strain ATCC 35110 / GB-78).